We begin with the raw amino-acid sequence, 336 residues long: Sodium/bile acid cotransporter 7 (336 aa).

The Cytoplasmic segment spans residues Met1–Glu10. A helical transmembrane segment spans residues Trp11–Val31. Topologically, residues Lys32–His37 are extracellular. A helical transmembrane segment spans residues Pro38–Leu58. Over Lys59–Lys71 the chain is Cytoplasmic. Residues Leu72–Leu92 traverse the membrane as a helical segment. At Lys93–Pro116 the chain is on the extracellular side. Residues Pro117–Phe137 form a helical membrane-spanning segment. A topological domain (cytoplasmic) is located at residue Asn138. Residues Ser139–Gly159 traverse the membrane as a helical segment. The Extracellular segment spans residues Ser160–Ser163. The chain crosses the membrane as a helical span at residues Val164–Gly184. Residues Gln185 to Pro201 lie on the Cytoplasmic side of the membrane. Residues Phe202–Phe222 traverse the membrane as a helical segment. Residues Asn223–Ser233 are Extracellular-facing. A helical transmembrane segment spans residues Leu234 to Phe254. Over Leu255–Ala270 the chain is Cytoplasmic. A helical membrane pass occupies residues Ile271–Phe291. The Extracellular segment spans residues Glu292 to Ser298. A helical membrane pass occupies residues Leu299–Leu319. Residues Pro320–Ile336 are Cytoplasmic-facing.

Belongs to the bile acid:sodium symporter (BASS) (TC 2.A.28) family.

The protein localises to the cell membrane. Its subcellular location is the endoplasmic reticulum membrane. It localises to the golgi apparatus membrane. Involved in teeth and skeletal development. Has an essential role in the biosynthesis and trafficking of glycosaminoglycans and glycoproteins to produce a proper functioning extracellular matrix. Required for extracellular matrix mineralization. Also involved in the regulation of cellular calcium homeostasis. Does not show transport activity towards bile acids or steroid sulfates. This Danio rerio (Zebrafish) protein is Sodium/bile acid cotransporter 7 (slc10a7).